We begin with the raw amino-acid sequence, 305 residues long: Tyrosine recombinase XerC (305 aa).

Positions 4–95 (TSIQALINKW…AVKNFYRFLE (92 aa)) constitute a Core-binding (CB) domain. A Tyr recombinase domain is found at 116 to 298 (LLPKALSEDD…SIKHLEAVYT (183 aa)). Catalysis depends on residues R159, K182, H250, R253, and H276. Y285 acts as the O-(3'-phospho-DNA)-tyrosine intermediate in catalysis.

Belongs to the 'phage' integrase family. XerC subfamily. Forms a cyclic heterotetrameric complex composed of two molecules of XerC and two molecules of XerD.

Its subcellular location is the cytoplasm. Its function is as follows. Site-specific tyrosine recombinase, which acts by catalyzing the cutting and rejoining of the recombining DNA molecules. The XerC-XerD complex is essential to convert dimers of the bacterial chromosome into monomers to permit their segregation at cell division. It also contributes to the segregational stability of plasmids. The chain is Tyrosine recombinase XerC from Rickettsia peacockii (strain Rustic).